The chain runs to 539 residues: Fucosyltransferase 2 (539 aa).

The Cytoplasmic segment spans residues 1–5 (MRITE). Residues 6–26 (ILALFMVLVPVSLVIVAMFGY) traverse the membrane as a helical; Signal-anchor for type II membrane protein segment. Topologically, residues 27–539 (DQGNGFVQAS…SWGLKLVDNF (513 aa)) are lumenal. N44, N231, and N482 each carry an N-linked (GlcNAc...) asparagine glycan.

It belongs to the glycosyltransferase 37 family. As to expression, expressed in roots, stems, leaves, flowers, siliques and seedlings.

The protein localises to the golgi apparatus. Its subcellular location is the golgi stack membrane. It functions in the pathway protein modification; protein glycosylation. May be involved in cell wall biosynthesis. May act as a fucosyltransferase. The polypeptide is Fucosyltransferase 2 (FUT2) (Arabidopsis thaliana (Mouse-ear cress)).